An 858-amino-acid polypeptide reads, in one-letter code: Adenylate cyclase, germination specific (858 aa).

Residues 1 to 18 (MKKTFVKILSKSYVEGYP) lie on the Cytoplasmic side of the membrane. The chain crosses the membrane as a helical; Signal-anchor for type II membrane protein span at residues 19–41 (VGFFIGLIILAIFGSMVCIFSFM). Residues 42–858 (HYSEEENSNI…DENVESKKNK (817 aa)) are Extracellular-facing. Residues 86–317 (VNPNFDRNDF…DCVLKLWIFT (232 aa)) form the CHASE domain. The Guanylate cyclase domain maps to 396-526 (CVFFLDIAGF…DTVNVASRME (131 aa)). Mg(2+) contacts are provided by Asp-401, Ile-402, and Asp-445. Disordered regions lie at residues 650–691 (YYYH…YHDT), 767–803 (SDNV…STNE), and 827–858 (ENCD…KKNK). Composition is skewed to low complexity over residues 767-778 (SDNVNNYENNNN), 788-797 (GDNNNINDNN), and 834-849 (DNNN…NNND).

Belongs to the adenylyl cyclase class-4/guanylyl cyclase family.

Its subcellular location is the membrane. It carries out the reaction ATP = 3',5'-cyclic AMP + diphosphate. Insensitive to guanine nucleotides. Functionally, has a large extracellular domain which may be involved in the recognition of an extracellular signal present during germination, leading to activation or inhibition of cAMP synthesis by the cytoplasmic domain. This Dictyostelium discoideum (Social amoeba) protein is Adenylate cyclase, germination specific (acgA).